A 1350-amino-acid chain; its full sequence is Nidogen (1350 aa).

The first 22 residues, 1-22, serve as a signal peptide directing secretion; it reads MPTFGSKLLACLLLSSVILVSG. Residues 107–260 enclose the NIDO domain; sequence AFYSNVDTSF…GVWLFEVAPI (154 aa). A glycan (N-linked (GlcNAc...) asparagine) is linked at Asn-231. Residues 281–321 enclose the EGF-like 1 domain; it reads LALSCQAHAHQCHEKAECHDKAEGYCCVCGSGFYGNGKSCL. 3 cysteine pairs are disulfide-bonded: Cys-285–Cys-298, Cys-292–Cys-307, and Cys-309–Cys-320. Residues 325–550 form the Nidogen G2 beta-barrel domain; sequence QPIRVTGTLT…GVTPESNACN (226 aa). N-linked (GlcNAc...) asparagine glycosylation is found at Asn-423 and Asn-480. The EGF-like 2 domain maps to 545–583; it reads ESNACNDGTADCVENSVCVPYEDTYRCDCYHGFAAQLDE. 5 cysteine pairs are disulfide-bonded: Cys-549/Cys-562, Cys-556/Cys-571, Cys-595/Cys-608, Cys-602/Cys-617, and Cys-619/Cys-630. One can recognise an EGF-like 3; calcium-binding domain in the interval 591–631; the sequence is DIDECATGSHVCDENAVCDNTEGGFNCYCTEGFEGNGYRCL. Residue Asn-633 is glycosylated (N-linked (GlcNAc...) asparagine). The tract at residues 645-691 is disordered; sequence VEGQAEPTSEPSPNPSPYPDQGQDQEREREDDQYPQPNPYPYPEEQI. 5 consecutive EGF-like domains span residues 788 to 829, 832 to 874, 912 to 953, 955 to 996, and 997 to 1037; these read DLIP…YNCD, SDDS…FNCQ, PAGR…TGCT, KPLS…YVCI, and EEQN…SLCQ. 15 disulfides stabilise this stretch: Cys-792–Cys-804, Cys-798–Cys-815, Cys-817–Cys-828, Cys-836–Cys-849, Cys-843–Cys-860, Cys-862–Cys-873, Cys-916–Cys-927, Cys-921–Cys-938, Cys-940–Cys-952, Cys-959–Cys-971, Cys-965–Cys-982, Cys-984–Cys-995, Cys-1001–Cys-1014, Cys-1008–Cys-1023, and Cys-1025–Cys-1036. Residue Asn-801 is glycosylated (N-linked (GlcNAc...) asparagine). Asn-1032 carries an N-linked (GlcNAc...) asparagine glycan. 4 LDL-receptor class B repeats span residues 1084 to 1126, 1127 to 1170, 1171 to 1216, and 1257 to 1282; these read GRVY…DVIS, RRLY…DPYR, EKLF…LENS, and DQFYWTDWTTKKVEIVDSLGARQTPI.

As to expression, expressed in the basement membrane around the follicular epithelium of the adult ovary (at protein level).

It localises to the secreted. The protein localises to the extracellular space. It is found in the extracellular matrix. Its subcellular location is the basement membrane. In terms of biological role, cell adhesion glycoprotein which is widely distributed in basement membranes. Involved in cell-extracellular matrix (ECM) interactions probably by connecting the laminin and collagen IV networks. Required for permeability and mechanical stability of basement membranes, and ECM dependent neural plasticity. Not involved in assembly of the embryonic basement membrane. This is Nidogen from Drosophila melanogaster (Fruit fly).